The chain runs to 623 residues: Chaperone protein DnaK (623 aa).

The residue at position 174 (threonine 174) is a Phosphothreonine; by autocatalysis. 2 disordered regions span residues 470–504 (ITIKSSSGLSDEEIKKMQKDAEEHAEEDKKRKEEV) and 578–623 (GGAQ…DPDK). The span at 481–504 (EEIKKMQKDAEEHAEEDKKRKEEV) shows a compositional bias: basic and acidic residues. Residues 578 to 604 (GGAQGAAGQAGPQGAQGGQPNNDNGSS) are compositionally biased toward low complexity. The span at 614–623 (GDFHKVDPDK) shows a compositional bias: basic and acidic residues.

This sequence belongs to the heat shock protein 70 family.

Functionally, acts as a chaperone. The polypeptide is Chaperone protein DnaK (Lactobacillus gasseri (strain ATCC 33323 / DSM 20243 / BCRC 14619 / CIP 102991 / JCM 1131 / KCTC 3163 / NCIMB 11718 / NCTC 13722 / AM63)).